Consider the following 258-residue polypeptide: L-2,3-butanediol dehydrogenase (258 aa).

NAD(+) contacts are provided by residues 12–14 (QGI), D33, Q37, 61–62 (DV), N88, Y154, K158, and 184–189 (PGIVGT). The active-site Proton acceptor is the Y154.

Belongs to the short-chain dehydrogenases/reductases (SDR) family. Homotetramer.

The catalysed reaction is (S,S)-butane-2,3-diol + NAD(+) = (S)-acetoin + NADH + H(+). The enzyme catalyses (S)-acetoin + NAD(+) = diacetyl + NADH + H(+). Its activity is regulated as follows. Slightly activated by Ba(2+), Ca(2+), Mn(2+), Mg(2+), and Co(2+), while Hg(2+) and Cu(2+) cause marked inhibition of the activity. Ni(2+), Zn(2+) and Cd(2+) have no effect on the catalytic activity. Is also slightly inhibited by lactate, pyruvate, succinate, acetate and formate. Catalyzes the reversible reduction of (S)-acetoin to (S,S)-butane-2,3-diol (L-BD) in the presence of NADH. To a lesser extent, can also catalyze the irreversible reduction of diacetyl to (S)-acetoin. Cannot oxidize meso-BD, D-BD, 2-butanol, 1,2-propanediol, ethanol, acetol, 1,2-butanediol, 1,3-butanediol, n-butanol, and n-propanol. Cannot reduce (R)-acetoin, acetol, dihydroxyacetone and 2,4-pentanedione. The chain is L-2,3-butanediol dehydrogenase from Corynebacterium glutamicum (Brevibacterium saccharolyticum).